A 188-amino-acid chain; its full sequence is Scytalone dehydratase (188 aa).

The substrate site is built by tyrosine 27, tyrosine 47, and phenylalanine 50. Active-site residues include histidine 82 and histidine 107. Substrate is bound at residue asparagine 128.

Belongs to the scytalone dehydratase family. In terms of assembly, homotrimer. Each subunit contains an active site, located in the central part of the hydrophobic core of the monomer, which functions independently.

The protein localises to the endosome. It catalyses the reaction scytalone = 1,3,8-trihydroxynaphthalene + H2O. Its pathway is pigment biosynthesis; melanin biosynthesis. Its activity is regulated as follows. Carpropamid acts as an efficient inhibitor of scytalone dehydratase activity. Scytalone dehydratase; part of the gene cluster that mediates the biosynthesis of dihydroxynaphthalene (DHN)-melanin, a bluish-green pigment and a structural component of the conidial wall. Within the pathway, catalyzes the dehydration of scytalone as well as of vermelone. This is Scytalone dehydratase from Colletotrichum orbiculare (strain 104-T / ATCC 96160 / CBS 514.97 / LARS 414 / MAFF 240422) (Cucumber anthracnose fungus).